Consider the following 204-residue polypeptide: Putative F-box protein L168 (204 aa).

The F-box domain occupies 1-46; that stretch reads MNLCDLFDEIIIGIIDELSDRDKIKFMTTCSRFYYFIDKTKYFDIY. Positions 161 to 184 are disordered; the sequence is NETNKITNNHTNKKINNNKKHQNN. A compositionally biased stretch (basic residues) spans 171–183; it reads TNKKINNNKKHQN.

This is Putative F-box protein L168 from Acanthamoeba polyphaga (Amoeba).